A 225-amino-acid chain; its full sequence is Membrane protein (225 aa).

Over 1 to 20 the chain is Virion surface; it reads MSNETNCTLDFEQSVQLFKE. Asn3 and Asn6 each carry an N-linked (GlcNAc...) asparagine; by host glycan. Residues 21-41 form a helical membrane-spanning segment; the sequence is YNLFITAFLLFLTIILQYGYA. The Intravirion portion of the chain corresponds to 42-51; it reads TRSKVIYTLK. Residues 52–72 form a helical membrane-spanning segment; it reads MIVLWCFWPLNIAVGVISCIY. The Virion surface segment spans residues 73–77; the sequence is PPNTG. A helical membrane pass occupies residues 78 to 98; it reads GLVAAIILTVFACLSFVGYWI. The Intravirion segment spans residues 99–225; it reads QSIRLFKRCR…VATGGSSLYT (127 aa).

This sequence belongs to the gammacoronaviruses M protein family. Homomultimer. Interacts with envelope E protein in the budding compartment of the host cell, which is located between endoplasmic reticulum and the Golgi complex. Forms a complex with HE and S proteins. Interacts with nucleocapsid N protein. This interaction probably participates in RNA packaging into the virus.

Its subcellular location is the virion membrane. The protein resides in the host Golgi apparatus membrane. In terms of biological role, component of the viral envelope that plays a central role in virus morphogenesis and assembly via its interactions with other viral proteins. This chain is Membrane protein, found in Gallus gallus (Chicken).